A 20-amino-acid chain; its full sequence is Phospholipase A2 homolog P-elapitoxin-Aa1a gamma chain (20 aa).

The protein belongs to the phospholipase A2 family. Group I subfamily. In terms of assembly, heterotrimer of alpha, beta and gamma chains, each related to PLA2. Post-translationally, glycosylated. In terms of tissue distribution, expressed by the venom gland.

The protein resides in the secreted. Functionally, heterotrimer: Snake venom phospholipase A2 (PLA2) that has presynaptic neurotoxicity. Inhibits nerve-evoked twitch contractions but not responses to cholinergic agonists acetylcholine and carbachol and to depolarizing agonist KCl. Causes a fade in tetanic contractions. Displays a triphasic mode of action with depression, enhancement and blockade of neurotransmission. Does not display myotoxic activity such as changes in baseline muscle tension or inhibition of directly stimulated muscle twitches. All subunits are necessary for maximum toxicity. Its function is as follows. Monomer: the gamma chain has no significant enzymatic activity and is not toxic by itself. The chain is Phospholipase A2 homolog P-elapitoxin-Aa1a gamma chain from Acanthophis antarcticus (Common death adder).